The chain runs to 171 residues: Adenine phosphoribosyltransferase (171 aa).

Belongs to the purine/pyrimidine phosphoribosyltransferase family. In terms of assembly, homodimer.

It localises to the cytoplasm. It catalyses the reaction AMP + diphosphate = 5-phospho-alpha-D-ribose 1-diphosphate + adenine. It participates in purine metabolism; AMP biosynthesis via salvage pathway; AMP from adenine: step 1/1. Functionally, catalyzes a salvage reaction resulting in the formation of AMP, that is energically less costly than de novo synthesis. The sequence is that of Adenine phosphoribosyltransferase (apt) from Prochlorococcus marinus subsp. pastoris (strain CCMP1986 / NIES-2087 / MED4).